The chain runs to 910 residues: Myelin regulatory factor-like protein (910 aa).

Positions Gly142–Ser405 form a DNA-binding region, NDT80. A disordered region spans residues Arg189–Thr208. Residues Ser451–Ile559 enclose the Peptidase S74 domain. A coiled-coil region spans residues Gly543–Leu575. The helical transmembrane segment at Leu628–Ile648 threads the bilayer. The interval Leu661 to Ala682 is disordered. The span at Pro663–Ala682 shows a compositional bias: polar residues.

This sequence belongs to the MRF family.

The protein resides in the membrane. The chain is Myelin regulatory factor-like protein (MYRFL) from Homo sapiens (Human).